The following is a 66-amino-acid chain: Large ribosomal subunit protein bL35c (66 aa).

This sequence belongs to the bacterial ribosomal protein bL35 family.

It localises to the plastid. The protein localises to the chloroplast. This Guillardia theta (Cryptophyte) protein is Large ribosomal subunit protein bL35c.